Consider the following 101-residue polypeptide: MEITEVRVFPVNEEKLKAYVTITLDHCFVIRDLKVIHGNTGLFIAMPAKRRKDGTFKDIAHPLNSDTREKMERTILAEYDRELKKGAAAPARATGTDPHED.

The protein belongs to the SpoVG family.

Could be involved in septation. The sequence is that of Putative septation protein SpoVG from Anaeromyxobacter dehalogenans (strain 2CP-C).